The primary structure comprises 100 residues: NADH-quinone oxidoreductase subunit K (100 aa).

3 helical membrane passes run 4–24, 28–48, and 60–80; these read LQHG…GLVI, LLFM…AFVV, and VMYI…LALL.

This sequence belongs to the complex I subunit 4L family. NDH-1 is composed of 13 different subunits. Subunits NuoA, H, J, K, L, M, N constitute the membrane sector of the complex.

The protein resides in the cell inner membrane. The enzyme catalyses a quinone + NADH + 5 H(+)(in) = a quinol + NAD(+) + 4 H(+)(out). NDH-1 shuttles electrons from NADH, via FMN and iron-sulfur (Fe-S) centers, to quinones in the respiratory chain. The immediate electron acceptor for the enzyme in this species is believed to be ubiquinone. Couples the redox reaction to proton translocation (for every two electrons transferred, four hydrogen ions are translocated across the cytoplasmic membrane), and thus conserves the redox energy in a proton gradient. This is NADH-quinone oxidoreductase subunit K from Shigella boydii serotype 18 (strain CDC 3083-94 / BS512).